Here is a 343-residue protein sequence, read N- to C-terminus: Ornithine carbamoyltransferase, catabolic (343 aa).

62–65 lines the carbamoyl phosphate pocket; the sequence is STRT. Histidine 79 contributes to the Ni(2+) binding site. Residues glutamine 89, arginine 113, and 140-143 contribute to the carbamoyl phosphate site; that span reads HPTQ. L-ornithine-binding positions include asparagine 172, aspartate 236, and 240 to 241; that span reads SM. Carbamoyl phosphate-binding positions include 278 to 279 and arginine 323; that span reads CL.

Belongs to the aspartate/ornithine carbamoyltransferase superfamily. OTCase family. Homohexamer; dimer of trimers. Requires Ni(2+) as cofactor.

The protein localises to the cytoplasm. The enzyme catalyses carbamoyl phosphate + L-ornithine = L-citrulline + phosphate + H(+). Its pathway is amino-acid degradation; L-arginine degradation via ADI pathway; carbamoyl phosphate from L-arginine: step 2/2. Functionally, involved in the catabolism of arginine. Catalyzes the phosphorolysis of citrulline, the reverse reaction of the biosynthetic one, yielding ornithine and carbamoyl phosphate which serve to generate ATP from ADP. This chain is Ornithine carbamoyltransferase, catabolic, found in Lentilactobacillus hilgardii (Lactobacillus hilgardii).